The sequence spans 98 residues: Sarcosine oxidase subunit delta (98 aa).

Cys6, Cys9, His59, and Cys63 together coordinate Zn(2+).

It belongs to the SoxD family. In terms of assembly, heterotetramer composed of subunits alpha (SoxA), beta (SoxB), gamma (SoxG) and delta (SoxD).

The protein resides in the cytoplasm. The catalysed reaction is sarcosine + (6S)-5,6,7,8-tetrahydrofolate + O2 = (6R)-5,10-methylene-5,6,7,8-tetrahydrofolate + glycine + H2O2. The enzyme catalyses sarcosine + O2 + H2O = formaldehyde + glycine + H2O2. Functionally, in the presence of tetrahydrofolate, catalyzes the oxidative demethylation of sarcosine to yield glycine, 5,10-methylenetetrahydrofolate and hydrogen peroxide. In the absence of tetrahydrofolate, catalyzes the oxidative demethylation of sarcosine to yield glycine, formaldehyde and hydrogen peroxide. This chain is Sarcosine oxidase subunit delta, found in Corynebacterium sp. (strain P-1).